We begin with the raw amino-acid sequence, 555 residues long: Chaperonin GroEL 2 (555 aa).

ATP-binding positions include Thr-29–Pro-32, Asp-86–Thr-90, Gly-414, Asn-480–Leu-482, and Asp-496.

The protein belongs to the chaperonin (HSP60) family. Forms a cylinder of 14 subunits composed of two heptameric rings stacked back-to-back. Interacts with the co-chaperonin GroES.

Its subcellular location is the cytoplasm. The enzyme catalyses ATP + H2O + a folded polypeptide = ADP + phosphate + an unfolded polypeptide.. Its function is as follows. Together with its co-chaperonin GroES, plays an essential role in assisting protein folding. The GroEL-GroES system forms a nano-cage that allows encapsulation of the non-native substrate proteins and provides a physical environment optimized to promote and accelerate protein folding. In Synechococcus sp. (strain ATCC 27144 / PCC 6301 / SAUG 1402/1) (Anacystis nidulans), this protein is Chaperonin GroEL 2.